The following is a 259-amino-acid chain: Cytochrome c oxidase subunit 3 (259 aa).

Helical transmembrane passes span 13 to 33, 36 to 56, 80 to 100, 125 to 145, 154 to 174, 195 to 215, and 237 to 257; these read PWPL…TSWF, HGFI…FQWW, GMVL…WAYF, FQIP…VTWA, HAEA…FTLL, FFVA…FLLI, and AWYW…IYWW.

Belongs to the cytochrome c oxidase subunit 3 family. In terms of assembly, component of the cytochrome c oxidase (complex IV, CIV), a multisubunit enzyme composed of a catalytic core of 3 subunits and several supernumerary subunits. The complex exists as a monomer or a dimer and forms supercomplexes (SCs) in the inner mitochondrial membrane with ubiquinol-cytochrome c oxidoreductase (cytochrome b-c1 complex, complex III, CIII).

It is found in the mitochondrion inner membrane. It carries out the reaction 4 Fe(II)-[cytochrome c] + O2 + 8 H(+)(in) = 4 Fe(III)-[cytochrome c] + 2 H2O + 4 H(+)(out). Its function is as follows. Component of the cytochrome c oxidase, the last enzyme in the mitochondrial electron transport chain which drives oxidative phosphorylation. The respiratory chain contains 3 multisubunit complexes succinate dehydrogenase (complex II, CII), ubiquinol-cytochrome c oxidoreductase (cytochrome b-c1 complex, complex III, CIII) and cytochrome c oxidase (complex IV, CIV), that cooperate to transfer electrons derived from NADH and succinate to molecular oxygen, creating an electrochemical gradient over the inner membrane that drives transmembrane transport and the ATP synthase. Cytochrome c oxidase is the component of the respiratory chain that catalyzes the reduction of oxygen to water. Electrons originating from reduced cytochrome c in the intermembrane space (IMS) are transferred via the dinuclear copper A center (CU(A)) of subunit 2 and heme A of subunit 1 to the active site in subunit 1, a binuclear center (BNC) formed by heme A3 and copper B (CU(B)). The BNC reduces molecular oxygen to 2 water molecules using 4 electrons from cytochrome c in the IMS and 4 protons from the mitochondrial matrix. The chain is Cytochrome c oxidase subunit 3 (COIII) from Heterololigo bleekeri (Spear squid).